Here is a 208-residue protein sequence, read N- to C-terminus: Ion-translocating oxidoreductase complex subunit G (208 aa).

A helical membrane pass occupies residues 9 to 29; sequence GVTLAVFAALTTGLTAMVNAL. At threonine 174 the chain carries FMN phosphoryl threonine.

This sequence belongs to the RnfG family. In terms of assembly, the complex is composed of six subunits: RnfA, RnfB, RnfC, RnfD, RnfE and RnfG. FMN is required as a cofactor.

Its subcellular location is the cell inner membrane. Functionally, part of a membrane-bound complex that couples electron transfer with translocation of ions across the membrane. The chain is Ion-translocating oxidoreductase complex subunit G from Cronobacter sakazakii (strain ATCC BAA-894) (Enterobacter sakazakii).